A 184-amino-acid chain; its full sequence is ATP synthase subunit b, chloroplastic (184 aa).

A helical membrane pass occupies residues 27–49; sequence LATNLINLSVVLGVLIFFGKGVL.

The protein belongs to the ATPase B chain family. F-type ATPases have 2 components, F(1) - the catalytic core - and F(0) - the membrane proton channel. F(1) has five subunits: alpha(3), beta(3), gamma(1), delta(1), epsilon(1). F(0) has four main subunits: a(1), b(1), b'(1) and c(10-14). The alpha and beta chains form an alternating ring which encloses part of the gamma chain. F(1) is attached to F(0) by a central stalk formed by the gamma and epsilon chains, while a peripheral stalk is formed by the delta, b and b' chains.

The protein localises to the plastid. The protein resides in the chloroplast thylakoid membrane. In terms of biological role, f(1)F(0) ATP synthase produces ATP from ADP in the presence of a proton or sodium gradient. F-type ATPases consist of two structural domains, F(1) containing the extramembraneous catalytic core and F(0) containing the membrane proton channel, linked together by a central stalk and a peripheral stalk. During catalysis, ATP synthesis in the catalytic domain of F(1) is coupled via a rotary mechanism of the central stalk subunits to proton translocation. Its function is as follows. Component of the F(0) channel, it forms part of the peripheral stalk, linking F(1) to F(0). In Helianthus annuus (Common sunflower), this protein is ATP synthase subunit b, chloroplastic.